The chain runs to 126 residues: Aspartate 1-decarboxylase (126 aa).

Ser-25 acts as the Schiff-base intermediate with substrate; via pyruvic acid in catalysis. Residue Ser-25 is modified to Pyruvic acid (Ser). A substrate-binding site is contributed by Thr-57. The Proton donor role is filled by Tyr-58. 73-75 (GAA) contributes to the substrate binding site.

Belongs to the PanD family. Heterooctamer of four alpha and four beta subunits. The cofactor is pyruvate. Is synthesized initially as an inactive proenzyme, which is activated by self-cleavage at a specific serine bond to produce a beta-subunit with a hydroxyl group at its C-terminus and an alpha-subunit with a pyruvoyl group at its N-terminus.

The protein resides in the cytoplasm. The enzyme catalyses L-aspartate + H(+) = beta-alanine + CO2. Its pathway is cofactor biosynthesis; (R)-pantothenate biosynthesis; beta-alanine from L-aspartate: step 1/1. Catalyzes the pyruvoyl-dependent decarboxylation of aspartate to produce beta-alanine. This Photorhabdus laumondii subsp. laumondii (strain DSM 15139 / CIP 105565 / TT01) (Photorhabdus luminescens subsp. laumondii) protein is Aspartate 1-decarboxylase.